Reading from the N-terminus, the 184-residue chain is MSLRSEHIWIELIKGSRKISNFCWAFILFVGSVGFLLVGISSYLGRNLISFFPSQQIVFFPQGIVMSFYGIAGLFISSYLWCTISWNVGNGYDRFDRKEGIVCIFRWGFPGKNRRIFLRFLIKDIQSIRIEVKEGIFARRVLYMEIRGQGTIPLTRTDENLTPREIEQKAAELAYFLRVPIEVF.

2 helical membrane passes run 22 to 42 (FCWA…GISS) and 57 to 77 (IVFF…LFIS).

It belongs to the Ycf4 family.

Its subcellular location is the plastid. The protein resides in the chloroplast thylakoid membrane. In terms of biological role, seems to be required for the assembly of the photosystem I complex. The sequence is that of Photosystem I assembly protein Ycf4 from Coffea arabica (Arabian coffee).